Reading from the N-terminus, the 136-residue chain is Large ribosomal subunit protein uL16 (136 aa).

It belongs to the universal ribosomal protein uL16 family. Part of the 50S ribosomal subunit.

In terms of biological role, binds 23S rRNA and is also seen to make contacts with the A and possibly P site tRNAs. This chain is Large ribosomal subunit protein uL16, found in Shewanella halifaxensis (strain HAW-EB4).